The following is a 313-amino-acid chain: Probable GTP 3',8-cyclase (313 aa).

In terms of domain architecture, Radical SAM core spans 4-224 (RFGRSIEDLR…EIRSKHYRPR (221 aa)). R13 serves as a coordination point for GTP. Residues C20, C24, and C27 each coordinate [4Fe-4S] cluster. K60 is a binding site for GTP. G64 is an S-adenosyl-L-methionine binding site. T90 is a GTP binding site. An S-adenosyl-L-methionine-binding site is contributed by S114. Residue K151 participates in GTP binding. The [4Fe-4S] cluster site is built by C244 and C247. Residue 249 to 251 (RIR) coordinates GTP. C261 serves as a coordination point for [4Fe-4S] cluster.

This sequence belongs to the radical SAM superfamily. MoaA family. It depends on [4Fe-4S] cluster as a cofactor.

The catalysed reaction is GTP + AH2 + S-adenosyl-L-methionine = (8S)-3',8-cyclo-7,8-dihydroguanosine 5'-triphosphate + 5'-deoxyadenosine + L-methionine + A + H(+). The protein operates within cofactor biosynthesis; molybdopterin biosynthesis. Its function is as follows. Catalyzes the cyclization of GTP to (8S)-3',8-cyclo-7,8-dihydroguanosine 5'-triphosphate. The protein is Probable GTP 3',8-cyclase of Sulfurisphaera tokodaii (strain DSM 16993 / JCM 10545 / NBRC 100140 / 7) (Sulfolobus tokodaii).